The primary structure comprises 610 residues: Glutamine--fructose-6-phosphate aminotransferase [isomerizing] (610 aa).

The active-site Nucleophile; for GATase activity is Cys-2. Positions 2–218 (CGIVGAVAQR…EGDVAEITRR (217 aa)) constitute a Glutamine amidotransferase type-2 domain. 2 SIS domains span residues 286–426 (AAEI…QQGR) and 459–600 (LATD…VDQP). The active-site For Fru-6P isomerization activity is the Lys-605.

In terms of assembly, homodimer.

It localises to the cytoplasm. It carries out the reaction D-fructose 6-phosphate + L-glutamine = D-glucosamine 6-phosphate + L-glutamate. Catalyzes the first step in hexosamine metabolism, converting fructose-6P into glucosamine-6P using glutamine as a nitrogen source. This chain is Glutamine--fructose-6-phosphate aminotransferase [isomerizing], found in Vibrio vulnificus (strain YJ016).